The following is an 85-amino-acid chain: Arminin 2b (85 aa).

The N-terminal stretch at 1–18 (MKTVFAILFLAFIALTYA) is a signal peptide. Positions 19-57 (RSYEDVKEEIKNEIEKEILEDLEEESDELNDKSKEINDA) are excised as a propeptide. Ala82 is modified (alanine amide).

This sequence belongs to the arminin family. As to expression, expressed in entodermal epithelium along the body column.

Its subcellular location is the secreted. The protein localises to the target cell membrane. Antimicrobial peptide with a broad-spectrum antimicrobial activity. Keeps its antibacterial activity under a wide range of salt concentrations that mimic physiological conditions of human blood, which is surprising, since Hydra is an obligate freshwater animal with nearly no salt tolerance. Does not affect red blood cells. The protein is Arminin 2b of Hydra vulgaris (Hydra).